Consider the following 179-residue polypeptide: Alpha-S2-casein-like A (179 aa).

Positions 1 to 15 (MKFFIFTCLVAAALA) are cleaved as a signal peptide. Phosphoserine occurs at positions 24 and 25. A disordered region spans residues 44–121 (FQTPQDSASS…NAIYDVPSQE (78 aa)). A compositionally biased stretch (basic and acidic residues) spans 63–74 (ISEKIEQSEEQK). Residues 93–110 (PQICTPYQQQSSVNQRPQ) show a composition bias toward polar residues.

The protein belongs to the alpha-casein family. Mammary gland specific. Secreted in milk.

It localises to the secreted. Functionally, important role in the capacity of milk to transport calcium phosphate. This chain is Alpha-S2-casein-like A (Csn1s2a), found in Rattus norvegicus (Rat).